We begin with the raw amino-acid sequence, 464 residues long: Glutamate--tRNA ligase (464 aa).

A 'HIGH' region motif is present at residues 8–18; that stretch reads PSPTGYMHLGN. 4 residues coordinate Zn(2+): Cys-96, Cys-98, Cys-123, and His-125. Positions 240–244 match the 'KMSKS' region motif; sequence KLSKR. Lys-243 provides a ligand contact to ATP.

It belongs to the class-I aminoacyl-tRNA synthetase family. Glutamate--tRNA ligase type 1 subfamily. Monomer. Zn(2+) serves as cofactor.

The protein resides in the cytoplasm. It catalyses the reaction tRNA(Glu) + L-glutamate + ATP = L-glutamyl-tRNA(Glu) + AMP + diphosphate. Functionally, catalyzes the attachment of glutamate to tRNA(Glu) in a two-step reaction: glutamate is first activated by ATP to form Glu-AMP and then transferred to the acceptor end of tRNA(Glu). The polypeptide is Glutamate--tRNA ligase (Hydrogenobaculum sp. (strain Y04AAS1)).